A 469-amino-acid polypeptide reads, in one-letter code: Coumaroyl-CoA:anthocyanidin 3-O-glucoside-6''-O-coumaroyltransferase 1 (469 aa).

Residue methionine 1 is modified to N-acetylmethionine. Residues histidine 173 and aspartate 410 each act as proton acceptor in the active site.

This sequence belongs to the plant acyltransferase family. As to expression, highly expressed in flowers, leaves and roots. Lower levels of expression in stems and siliques.

Functionally, involved in the acylation of the 6'' position of the 3-O-glucose residue of anthocyanin. Also able to use flavonol 3-glucosides as the acyl acceptor. The polypeptide is Coumaroyl-CoA:anthocyanidin 3-O-glucoside-6''-O-coumaroyltransferase 1 (3AT1) (Arabidopsis thaliana (Mouse-ear cress)).